A 696-amino-acid polypeptide reads, in one-letter code: UvrABC system protein C (696 aa).

The 80-residue stretch at 16 to 95 (TEPGVYKFRD…IKRFDPRFNV (80 aa)) folds into the GIY-YIG domain. One can recognise a UVR domain in the interval 208-243 (DKVTRKLNADMMAAAEELDFERAARLRDDLEAIDKV).

Belongs to the UvrC family. Interacts with UvrB in an incision complex.

The protein localises to the cytoplasm. Functionally, the UvrABC repair system catalyzes the recognition and processing of DNA lesions. UvrC both incises the 5' and 3' sides of the lesion. The N-terminal half is responsible for the 3' incision and the C-terminal half is responsible for the 5' incision. This Corynebacterium glutamicum (strain R) protein is UvrABC system protein C.